A 554-amino-acid chain; its full sequence is (E)-nerolidol synthase TPS18VF (554 aa).

Arginine 276, aspartate 313, aspartate 317, arginine 455, and aspartate 458 together coordinate (2E,6E)-farnesyl diphosphate. Mg(2+) contacts are provided by aspartate 313 and aspartate 317. Residues 313-317 carry the DDXXD motif motif; that stretch reads DDIFD. Aspartate 458, serine 462, and glutamate 466 together coordinate Mg(2+).

This sequence belongs to the terpene synthase family. Tpsb subfamily. Mg(2+) serves as cofactor. Requires Mn(2+) as cofactor. In terms of tissue distribution, highly expressed in glandular trichomes.

The enzyme catalyses (2E,6E)-farnesyl diphosphate + H2O = (6E)-nerolidol + diphosphate. The catalysed reaction is (2E)-geranyl diphosphate + H2O = (R)-linalool + diphosphate. It catalyses the reaction (2E)-geranyl diphosphate + H2O = (S)-linalool + diphosphate. It participates in secondary metabolite biosynthesis; terpenoid biosynthesis. Functionally, involved in sesquiterpene olefins biosynthesis, constituants of cannabinoids and terpenoids-rich resins. Catalyzes primarily the conversion of (2E)-farnesyl diphosphate to (E)-nerolidol, and the conversion of (2E)-geranyl diphosphate to (+)linalool and (-)linalool. This is (E)-nerolidol synthase TPS18VF from Cannabis sativa (Hemp).